The following is a 346-amino-acid chain: Flap endonuclease 1 (346 aa).

The interval 1-102 (MGVTELGKLI…AEIEERRKTR (102 aa)) is N-domain. D31, D84, E156, E158, D177, D179, and D239 together coordinate Mg(2+). The I-domain stretch occupies residues 120 to 261 (DVAKYAKRAV…KALKLIWEFG (142 aa)).

This sequence belongs to the XPG/RAD2 endonuclease family. FEN1 subfamily. In terms of assembly, interacts with PCNA. PCNA stimulates the nuclease activity without altering cleavage specificity. It depends on Mg(2+) as a cofactor.

Structure-specific nuclease with 5'-flap endonuclease and 5'-3' exonuclease activities involved in DNA replication and repair. During DNA replication, cleaves the 5'-overhanging flap structure that is generated by displacement synthesis when DNA polymerase encounters the 5'-end of a downstream Okazaki fragment. Binds the unpaired 3'-DNA end and kinks the DNA to facilitate 5' cleavage specificity. Cleaves one nucleotide into the double-stranded DNA from the junction in flap DNA, leaving a nick for ligation. Also involved in the base excision repair (BER) pathway. Acts as a genome stabilization factor that prevents flaps from equilibrating into structures that lead to duplications and deletions. Also possesses 5'-3' exonuclease activity on nicked or gapped double-stranded DNA. This is Flap endonuclease 1 from Pyrobaculum aerophilum (strain ATCC 51768 / DSM 7523 / JCM 9630 / CIP 104966 / NBRC 100827 / IM2).